Here is a 119-residue protein sequence, read N- to C-terminus: Large ribosomal subunit protein uL22 (119 aa).

The protein belongs to the universal ribosomal protein uL22 family. As to quaternary structure, part of the 50S ribosomal subunit.

Its function is as follows. This protein binds specifically to 23S rRNA; its binding is stimulated by other ribosomal proteins, e.g. L4, L17, and L20. It is important during the early stages of 50S assembly. It makes multiple contacts with different domains of the 23S rRNA in the assembled 50S subunit and ribosome. Functionally, the globular domain of the protein is located near the polypeptide exit tunnel on the outside of the subunit, while an extended beta-hairpin is found that lines the wall of the exit tunnel in the center of the 70S ribosome. This is Large ribosomal subunit protein uL22 from Rickettsia felis (strain ATCC VR-1525 / URRWXCal2) (Rickettsia azadi).